The following is a 22-amino-acid chain: Probable ATP-dependent Clp protease proteolytic subunit (22 aa).

This sequence belongs to the peptidase S14 family. Component of the chloroplastic Clp protease core complex.

It carries out the reaction Hydrolysis of proteins to small peptides in the presence of ATP and magnesium. alpha-casein is the usual test substrate. In the absence of ATP, only oligopeptides shorter than five residues are hydrolyzed (such as succinyl-Leu-Tyr-|-NHMec, and Leu-Tyr-Leu-|-Tyr-Trp, in which cleavage of the -Tyr-|-Leu- and -Tyr-|-Trp bonds also occurs).. Functionally, cleaves peptides in various proteins in a process that requires ATP hydrolysis. Has a chymotrypsin-like activity. Plays a major role in the degradation of misfolded proteins. This Populus euphratica (Euphrates poplar) protein is Probable ATP-dependent Clp protease proteolytic subunit.